The chain runs to 456 residues: Enolase (456 aa).

Gln-167 lines the (2R)-2-phosphoglycerate pocket. Glu-209 acts as the Proton donor in catalysis. Asp-250, Glu-312, and Asp-339 together coordinate Mg(2+). Residues Lys-364, Arg-393, Ser-394, and Lys-415 each contribute to the (2R)-2-phosphoglycerate site. Residue Lys-364 is the Proton acceptor of the active site.

The protein belongs to the enolase family. Mg(2+) is required as a cofactor.

The protein resides in the cytoplasm. The protein localises to the secreted. It localises to the cell surface. The enzyme catalyses (2R)-2-phosphoglycerate = phosphoenolpyruvate + H2O. It participates in carbohydrate degradation; glycolysis; pyruvate from D-glyceraldehyde 3-phosphate: step 4/5. Functionally, catalyzes the reversible conversion of 2-phosphoglycerate (2-PG) into phosphoenolpyruvate (PEP). It is essential for the degradation of carbohydrates via glycolysis. In Mycoplasmopsis pulmonis (strain UAB CTIP) (Mycoplasma pulmonis), this protein is Enolase.